We begin with the raw amino-acid sequence, 238 residues long: Aspartate/glutamate leucyltransferase (238 aa).

The protein belongs to the R-transferase family. Bpt subfamily.

Its subcellular location is the cytoplasm. It carries out the reaction N-terminal L-glutamyl-[protein] + L-leucyl-tRNA(Leu) = N-terminal L-leucyl-L-glutamyl-[protein] + tRNA(Leu) + H(+). It catalyses the reaction N-terminal L-aspartyl-[protein] + L-leucyl-tRNA(Leu) = N-terminal L-leucyl-L-aspartyl-[protein] + tRNA(Leu) + H(+). Its function is as follows. Functions in the N-end rule pathway of protein degradation where it conjugates Leu from its aminoacyl-tRNA to the N-termini of proteins containing an N-terminal aspartate or glutamate. This is Aspartate/glutamate leucyltransferase from Nitrosococcus oceani (strain ATCC 19707 / BCRC 17464 / JCM 30415 / NCIMB 11848 / C-107).